The chain runs to 222 residues: Pyridoxal phosphate homeostasis protein (222 aa).

Lys-35 bears the N6-(pyridoxal phosphate)lysine mark.

This sequence belongs to the pyridoxal phosphate-binding protein YggS/PROSC family.

Functionally, pyridoxal 5'-phosphate (PLP)-binding protein, which is involved in PLP homeostasis. The polypeptide is Pyridoxal phosphate homeostasis protein (Helicobacter pylori (strain ATCC 700392 / 26695) (Campylobacter pylori)).